A 396-amino-acid chain; its full sequence is NAD(P)H oxidoreductase RTN4IP1, mitochondrial (396 aa).

A mitochondrion-targeting transit peptide spans 1–40 (MGFLKTCVFRRNACTAVCFWRSQVVQKPSVRKISTTSPRS). An Enoyl reductase (ER) domain is found at 52–393 (GSNEVLRFTQ…RGHARGKTVI (342 aa)). Ser-214, Gly-216, Val-217, Ser-237, Tyr-255, Asn-276, Leu-300, Ala-341, Phe-343, His-386, Ala-387, and Arg-388 together coordinate NADPH.

Belongs to the zinc-containing alcohol dehydrogenase family. Quinone oxidoreductase subfamily. As to quaternary structure, interacts with RTN4, UQCRC1 and UQCRC2.

Its subcellular location is the mitochondrion matrix. It localises to the mitochondrion outer membrane. The enzyme catalyses a 3-demethylubiquinone + NADH + 2 H(+) = a 3-demethylubiquinol + NAD(+). It catalyses the reaction a 3-demethylubiquinone + NADPH + 2 H(+) = a 3-demethylubiquinol + NADP(+). The catalysed reaction is 3-demethylubiquinone-10 + NADH + 2 H(+) = 3-demethylubiquinol-10 + NAD(+). It carries out the reaction 3-demethylubiquinone-10 + NADPH + 2 H(+) = 3-demethylubiquinol-10 + NADP(+). Its pathway is cofactor biosynthesis; ubiquinone biosynthesis. Functionally, NAD(P)H oxidoreductase involved in the ubiquinone biosynthetic pathway. Required for the O-methyltransferase activity of COQ3. Able to catalyze the oxidoreduction of 3-demethylubiquinone into 3-demethylubiquinol in vitro. However, it is unclear if 3-demethylubiquinone constitutes a substrate in vivo. May also play a role in the regulation of retinal ganglion cell (RGC) neurite outgrowth, and hence in the development of the inner retina and optic nerve. Appears to be a potent inhibitor of regeneration following spinal cord injury. In Bos taurus (Bovine), this protein is NAD(P)H oxidoreductase RTN4IP1, mitochondrial (RTN4IP1).